Reading from the N-terminus, the 155-residue chain is Small ribosomal subunit protein uS10m (155 aa).

Belongs to the universal ribosomal protein uS10 family. As to quaternary structure, component of the mitochondrial ribosome small subunit (28S) which comprises a 12S rRNA and about 30 distinct proteins.

The protein localises to the mitochondrion. This Rattus norvegicus (Rat) protein is Small ribosomal subunit protein uS10m (Mrps10).